The following is a 496-amino-acid chain: ATP synthase subunit beta, chloroplastic (496 aa).

Position 170–177 (170–177) interacts with ATP; that stretch reads GGAGVGKT.

It belongs to the ATPase alpha/beta chains family. As to quaternary structure, F-type ATPases have 2 components, CF(1) - the catalytic core - and CF(0) - the membrane proton channel. CF(1) has five subunits: alpha(3), beta(3), gamma(1), delta(1), epsilon(1). CF(0) has four main subunits: a(1), b(1), b'(1) and c(9-12).

It localises to the plastid. The protein resides in the chloroplast thylakoid membrane. It catalyses the reaction ATP + H2O + 4 H(+)(in) = ADP + phosphate + 5 H(+)(out). Its function is as follows. Produces ATP from ADP in the presence of a proton gradient across the membrane. The catalytic sites are hosted primarily by the beta subunits. The chain is ATP synthase subunit beta, chloroplastic from Trachycarpus fortunei (Chinese windmill palm).